The primary structure comprises 574 residues: Proline--tRNA ligase (574 aa).

The protein belongs to the class-II aminoacyl-tRNA synthetase family. ProS type 1 subfamily. Homodimer.

It is found in the cytoplasm. It carries out the reaction tRNA(Pro) + L-proline + ATP = L-prolyl-tRNA(Pro) + AMP + diphosphate. Functionally, catalyzes the attachment of proline to tRNA(Pro) in a two-step reaction: proline is first activated by ATP to form Pro-AMP and then transferred to the acceptor end of tRNA(Pro). As ProRS can inadvertently accommodate and process non-cognate amino acids such as alanine and cysteine, to avoid such errors it has two additional distinct editing activities against alanine. One activity is designated as 'pretransfer' editing and involves the tRNA(Pro)-independent hydrolysis of activated Ala-AMP. The other activity is designated 'posttransfer' editing and involves deacylation of mischarged Ala-tRNA(Pro). The misacylated Cys-tRNA(Pro) is not edited by ProRS. The chain is Proline--tRNA ligase from Nitratidesulfovibrio vulgaris (strain DP4) (Desulfovibrio vulgaris).